The chain runs to 277 residues: NH(3)-dependent NAD(+) synthetase (277 aa).

Residue Gly-36–Ser-43 coordinates ATP. Asp-42 contributes to the Mg(2+) binding site. Arg-118 provides a ligand contact to deamido-NAD(+). Thr-138 lines the ATP pocket. Residue Glu-143 coordinates Mg(2+). 2 residues coordinate ATP: Lys-167 and Ser-189.

Belongs to the NAD synthetase family. In terms of assembly, homodimer.

The enzyme catalyses deamido-NAD(+) + NH4(+) + ATP = AMP + diphosphate + NAD(+) + H(+). The protein operates within cofactor biosynthesis; NAD(+) biosynthesis; NAD(+) from deamido-NAD(+) (ammonia route): step 1/1. Catalyzes the ATP-dependent amidation of deamido-NAD to form NAD. Uses ammonia as a nitrogen source. This Chlorobaculum tepidum (strain ATCC 49652 / DSM 12025 / NBRC 103806 / TLS) (Chlorobium tepidum) protein is NH(3)-dependent NAD(+) synthetase.